A 1216-amino-acid chain; its full sequence is MKLIPFLSEEEIQKLQEAEANSSKEQKKTAEQIEAIYTSGQNILVSASAGSGKTFVMAERILNQLARGVEISQLFISTFTVKAATELKERLEKKISKKIQETDDVDLKQHLGRQLADLPNAAIGTMDSFTQKFLGKHGYLLDIAPNFRILQNQSEQLLLENEVFHEVFEAHYQGKQKETFSHLLKNFAGRGKDERGLRQQVYKIYDFLQSTSNPQKWLSESFLKGFEKADFTSEKEKLTEQIKQALWDLESFFRYHLDNDAKEFAKAAYLENVQLILDEIGSLNQESDSQAYQAVLARVVAISKEKNGRALTNASRKADLKPLADAYNEERKTQFAKLGQLSDQITILDYQERYHQDTWELAKTFQTFMSHFVEAYRQRKRQENAFEFADISHYTIEILENFPQVRESYQERFHEVMVDEYQDTNHIQERMLELLSNGHNRFMVGDIKQSIYRFRQADPQIFNEKFQRYAQNPQEGKLILLKANFRSSSEVLSATNDVFERLMDQEVGEINYDNKHQLVFANTKLTPNPDNKAEFLLYDKDDTGEEEESQTETKLTGEMRLVIKEILKLHQEKGVAFKEIALLTSSRSRNDQILLALSEYGIPVKTDGEQNNYLQSLEVQVMLDTLRVIHNPLQDYALVALMKSPMFGFDEDELARLSLQKAEDKVHENLYEKLVNAQKMASSQKGLIHTALAEKLKQFMDILASWRLYAKTHSLYDLIWKIYNDRFYYDYVGALPNGPARQANLYALALRADQFEKSNFKGLSRFIRMIDQVLEAQHDLASVAVAPPKDAVELMTIHKSKGLEFPYVFILNMDQDFNKQDSMSEVILSRQNGLGVKYIAKMETGAVEDHYPKTIKLSIPSLTYRQNEEELQLASYSEQMRLLYVAMTRAEKKLYLVGKGSREKLEVKQYPAAKNGKLNSNTRLQARNFQDWLWAISKVFTKDKLNFSYRFIGEDQLTREAIGELETKSPLQDSSQADNRQSDTIKEALEMLKEVEVYNTLHRAAIELPSVQTPSQIKKFYEPVMDMEGVEIAGQGQSVGKKISFDLPDFSTKEKVTGAEIGSATHELMQRIDLSQQLTLASLTETLKQVQTSQAVRDKINLDKILAFFDTVLGQEILANTDHLYREQPFSMLKRDQKSQEDFVVRGILDGYLLYENKIVLFDYKTDRYDEPSQLVDRYRGQLALYEEALSRAYSIENIEKYLILLGKDEVQVVKV.

One can recognise a UvrD-like helicase ATP-binding domain in the interval 26 to 488; sequence QKKTAEQIEA…ILLKANFRSS (463 aa). 47–54 contacts ATP; the sequence is ASAGSGKT. The UvrD-like helicase C-terminal domain occupies 515–802; the sequence is KHQLVFANTK…ELMTIHKSKG (288 aa).

The protein belongs to the helicase family. AddA subfamily. As to quaternary structure, heterodimer of AddA and AddB/RexB. Mg(2+) serves as cofactor.

It catalyses the reaction Couples ATP hydrolysis with the unwinding of duplex DNA by translocating in the 3'-5' direction.. It carries out the reaction ATP + H2O = ADP + phosphate + H(+). The heterodimer acts as both an ATP-dependent DNA helicase and an ATP-dependent, dual-direction single-stranded exonuclease. Recognizes the chi site generating a DNA molecule suitable for the initiation of homologous recombination. The AddA nuclease domain is required for chi fragment generation; this subunit has the helicase and 3' -&gt; 5' nuclease activities. This is ATP-dependent helicase/nuclease subunit A from Streptococcus pneumoniae (strain ATCC 700669 / Spain 23F-1).